We begin with the raw amino-acid sequence, 224 residues long: 7-cyano-7-deazaguanine synthase (224 aa).

Residue 8-18 (LSGGMDSAAVI) participates in ATP binding. Residues cysteine 186, cysteine 196, cysteine 199, and cysteine 202 each contribute to the Zn(2+) site.

This sequence belongs to the QueC family. Zn(2+) is required as a cofactor.

The catalysed reaction is 7-carboxy-7-deazaguanine + NH4(+) + ATP = 7-cyano-7-deazaguanine + ADP + phosphate + H2O + H(+). It functions in the pathway purine metabolism; 7-cyano-7-deazaguanine biosynthesis. In terms of biological role, catalyzes the ATP-dependent conversion of 7-carboxy-7-deazaguanine (CDG) to 7-cyano-7-deazaguanine (preQ(0)). The protein is 7-cyano-7-deazaguanine synthase of Xanthomonas campestris pv. campestris (strain 8004).